A 448-amino-acid chain; its full sequence is MRNAWEVNFDGLVGLTHNYAGLLFGNEASTRHRFQVSNPRLAAKQGLLKMKNLADAGFPQAVIPPHERPFIPVLRQLGFSGSDEQVLEKVARQAPHWLSSVSSASPMWVANAATIAPSVDTLDGKVHRTVANLNNKFHRSLEAPVTESLLKAIFNDEEKFSVHSALPQVALLGDEGAANHNRLGGHYGEPGMQLFVYGREKGNDTRPSRYPARQTREASEAVARLNQVNPQQVIFAQQNPDVIDQGVFHNDVIAVSNRQVLFCHQQAFARQSQLLANLRARVNGFMAIEVPATQVSVSDAVSTYLFNSQLLSRDDGSMMLVLPQECREHAGVWCYLNELLAADNPISELKVFDLRESMANGGGPACLRLRVVLTEEERRAVNPAVMMNDTLFNALNDWGDRYYRDRLTDADLADPQLLREGREALDVLSQLLNLGSVYPFQREGGGNG.

Substrate is bound by residues 20 to 29 (AGLLFGNEAS), Asn111, and 138 to 139 (HR). Glu175 is a catalytic residue. Residue Arg213 participates in substrate binding. His249 is an active-site residue. 2 residues coordinate substrate: Asp251 and Asn360. The active-site Nucleophile is Cys366.

Belongs to the succinylarginine dihydrolase family. Homodimer.

The enzyme catalyses N(2)-succinyl-L-arginine + 2 H2O + 2 H(+) = N(2)-succinyl-L-ornithine + 2 NH4(+) + CO2. The protein operates within amino-acid degradation; L-arginine degradation via AST pathway; L-glutamate and succinate from L-arginine: step 2/5. In terms of biological role, catalyzes the hydrolysis of N(2)-succinylarginine into N(2)-succinylornithine, ammonia and CO(2). The chain is N-succinylarginine dihydrolase from Shigella dysenteriae serotype 1 (strain Sd197).